A 108-amino-acid polypeptide reads, in one-letter code: MGVTVENISAGDGKTFPQPGDSVTIHYVGTLLDGSKFDSSRDRGTPFVCRIGQGQVIRGWDEGVPQLSIGQKANLICTPDYAYGARGFPPVIPPNSTLKFEVELLKIN.

Residues 20–108 (GDSVTIHYVG…KFEVELLKIN (89 aa)) enclose the PPIase FKBP-type domain.

This sequence belongs to the FKBP-type PPIase family. FKBP1 subfamily.

It is found in the cytoplasm. It carries out the reaction [protein]-peptidylproline (omega=180) = [protein]-peptidylproline (omega=0). Inhibited by both FK506 and rapamycin. PPIases accelerate the folding of proteins. It catalyzes the cis-trans isomerization of proline imidic peptide bonds in oligopeptides. In Cryptococcus neoformans var. neoformans serotype D (strain JEC21 / ATCC MYA-565) (Filobasidiella neoformans), this protein is FK506-binding protein 1 (FPR1).